We begin with the raw amino-acid sequence, 640 residues long: Phosphomethylpyrimidine synthase (640 aa).

Substrate-binding positions include N235, M264, Y293, H329, 349–351, 390–393, and E429; these read SRG and DGLR. Zn(2+) is bound at residue H433. Y456 contributes to the substrate binding site. H497 serves as a coordination point for Zn(2+). [4Fe-4S] cluster is bound by residues C577, C580, and C585.

It belongs to the ThiC family. As to quaternary structure, homodimer. [4Fe-4S] cluster is required as a cofactor.

It carries out the reaction 5-amino-1-(5-phospho-beta-D-ribosyl)imidazole + S-adenosyl-L-methionine = 4-amino-2-methyl-5-(phosphooxymethyl)pyrimidine + CO + 5'-deoxyadenosine + formate + L-methionine + 3 H(+). It functions in the pathway cofactor biosynthesis; thiamine diphosphate biosynthesis. Catalyzes the synthesis of the hydroxymethylpyrimidine phosphate (HMP-P) moiety of thiamine from aminoimidazole ribotide (AIR) in a radical S-adenosyl-L-methionine (SAM)-dependent reaction. This Photobacterium profundum (strain SS9) protein is Phosphomethylpyrimidine synthase.